The primary structure comprises 253 residues: Sulfate transporter CysZ (253 aa).

4 helical membrane passes run 31-51 (FVIL…WWLF), 75-95 (LLWP…FSTI), 151-171 (IVLL…PVLW), and 222-242 (IPLL…AMWV).

This sequence belongs to the CysZ family.

It localises to the cell inner membrane. High affinity, high specificity proton-dependent sulfate transporter, which mediates sulfate uptake. Provides the sulfur source for the cysteine synthesis pathway. The polypeptide is Sulfate transporter CysZ (Shigella flexneri serotype 5b (strain 8401)).